A 666-amino-acid polypeptide reads, in one-letter code: Phosphoenolpyruvate carboxykinase (ATP) (666 aa).

Disordered regions lie at residues 1 to 68 and 91 to 132; these read MATP…AHSP and ASLT…HPAA. Residues 48-58 show a composition bias toward polar residues; that stretch reads APTTPNRSAPT. Residues 109–123 are compositionally biased toward low complexity; it reads KGEAAAQGAPSTPRA. 364 to 371 is an ATP binding site; the sequence is GLSGTGKT.

The protein belongs to the phosphoenolpyruvate carboxykinase (ATP) family.

The protein localises to the cytoplasm. It catalyses the reaction oxaloacetate + ATP = phosphoenolpyruvate + ADP + CO2. Its pathway is carbohydrate biosynthesis; gluconeogenesis. The sequence is that of Phosphoenolpyruvate carboxykinase (ATP) from Zea mays (Maize).